The primary structure comprises 285 residues: Mitochondrial substrate carrier family protein L (285 aa).

Over Met1–Asn13 the chain is Mitochondrial intermembrane. 3 Solcar repeats span residues Lys8–Lys94, Ile103–Tyr185, and Met193–Phe282. A helical transmembrane segment spans residues Phe14–Leu34. Topologically, residues Lys35–Gly69 are mitochondrial matrix. A helical transmembrane segment spans residues Val70–Ile90. Topologically, residues Val91–Pro102 are mitochondrial intermembrane. The chain crosses the membrane as a helical span at residues Ile103 to Ala123. Residues Cys124–Arg156 lie on the Mitochondrial matrix side of the membrane. A helical membrane pass occupies residues Gly157–Gly177. Residues Cys178–Ser198 lie on the Mitochondrial intermembrane side of the membrane. Residues Phe199–Ile219 traverse the membrane as a helical segment. Topologically, residues Arg220 to Lys256 are mitochondrial matrix. A helical transmembrane segment spans residues Gly257–Glu277. The Mitochondrial intermembrane portion of the chain corresponds to Cys278–Met285.

The protein belongs to the mitochondrial carrier (TC 2.A.29) family.

It is found in the mitochondrion inner membrane. Functionally, mitochondrial solute carriers shuttle metabolites, nucleotides, and cofactors through the mitochondrial inner membrane. This is Mitochondrial substrate carrier family protein L (mcfL) from Dictyostelium discoideum (Social amoeba).